Reading from the N-terminus, the 314-residue chain is Protoheme IX farnesyltransferase (314 aa).

Transmembrane regions (helical) follow at residues 36–56 (IGIV…AISF), 65–85 (WGTF…GCIV), 114–134 (SVLT…MFTS), 135–155 (WYAT…YTIW), 179–199 (WAAI…IMFI), 237–257 (IIVY…TMGI), 259–279 (FAVI…TGLF), and 290–310 (IFIF…IVKL).

This sequence belongs to the UbiA prenyltransferase family. Protoheme IX farnesyltransferase subfamily. As to quaternary structure, interacts with CtaA.

Its subcellular location is the cell membrane. It catalyses the reaction heme b + (2E,6E)-farnesyl diphosphate + H2O = Fe(II)-heme o + diphosphate. The protein operates within porphyrin-containing compound metabolism; heme O biosynthesis; heme O from protoheme: step 1/1. Functionally, converts heme B (protoheme IX) to heme O by substitution of the vinyl group on carbon 2 of heme B porphyrin ring with a hydroxyethyl farnesyl side group. The polypeptide is Protoheme IX farnesyltransferase (Oceanobacillus iheyensis (strain DSM 14371 / CIP 107618 / JCM 11309 / KCTC 3954 / HTE831)).